Here is a 431-residue protein sequence, read N- to C-terminus: Glutamate--tRNA ligase 1 (431 aa).

The short motif at 11 to 21 (PSPTGDLHLGG) is the 'HIGH' region element. A 'KMSKS' region motif is present at residues 203–207 (KLSKR). An ATP-binding site is contributed by lysine 206.

Belongs to the class-I aminoacyl-tRNA synthetase family. Glutamate--tRNA ligase type 1 subfamily. As to quaternary structure, monomer.

The protein localises to the cytoplasm. It carries out the reaction tRNA(Glu) + L-glutamate + ATP = L-glutamyl-tRNA(Glu) + AMP + diphosphate. In terms of biological role, catalyzes the attachment of glutamate to tRNA(Glu) in a two-step reaction: glutamate is first activated by ATP to form Glu-AMP and then transferred to the acceptor end of tRNA(Glu). This Rubrobacter xylanophilus (strain DSM 9941 / JCM 11954 / NBRC 16129 / PRD-1) protein is Glutamate--tRNA ligase 1.